The following is a 2089-amino-acid chain: METESETSSLGDDSVFWLDCEGVTQLTDGDEEEREESFRKMKSSIHSEEDDFVPELHRNVHPRERPDWEETLSAMARGADVPEIPGDLTLKSCGSTASTKVKHVKKLPFTKGHFPKMAECAHFHYENVEFGSIQLSLSEEQNEVMKNGCESKELVYLVQIACQGKSWIVKRSYEDFRVLDKHLHLCIYDRRFSQLTELPRSDVLKDSPESVTQMLTAYLSRLSTIAGNKINCGPALTWMEIDNKGNHLLVHEESSINTPAVGAAHVIKRYTARAPDELTLEVGDIVSVIDMPPKVLSTWWRGKHGFQVGLFPGHCVELINQKVPQSVTNSVPKPVSKKHGKLITFLRTFMKSRPTKQKLKQRGILKERVFGCDLGEHLLNSGFEVPQVLQSCTAFIERYGIVDGIYRLSGVASNIQRLRHEFDSEHVPDLTKEPYVQDIHSVGSLCKLYFRELPNPLLTYQLYEKFSDAVSAATDEERLIKIHDVIQQLPPPHYRTLEFLMRHLSLLADYCSITNMHAKNLAIVWAPNLLRSKQIESACFSGTAAFMEVRIQSVVVEFILNHVDVLFSGKISAVMQEGAASLSRPKSLLVSSPSTKLLTLEEAQARTQAQVSSPIVTENKYIEVGEGPAALQGKFHTVIEFPLERKRPQNKMKKSPVGSWRSFFNLGKSSSVSKRKLQRNESEPSEMKAMALKGGRAEGTLRSAKSEESLTSLHAVDGDSKLFRPRRPRSSSDALSASFNGDVLGNRCNSYDNLPHDNESEEEVGLLHIPALVSPHSAEDVDLSPPDIGVASLDFDPMSFQCSPPKAESECLESGASFLDSLGYTRDKLSPSKKDAEAGGSQSQTPGSTASSEPVSPVQEKLSPFFTLDLSPTDDKSSKPSSFTEKVVYAFSPKIGRKLSKSPSMNISEPISVTLPPRVSEVIGTVSNTVAQNASPTSWDKSVEERDVINRSPTQLQLGKMKAGEREAQETCEPEAQPLEQGAAEEVELPGTEERPVLSSQSKAVPSGQSQTGAVTHDPPQDPVPVSSVSLIPPPPPPKNVARMLALALAESAQQASSQTLKRPGASQAGCTSYGDTAVVPSEEKLPSSYSSLTLDKTCFQTDRPAEQFHPQINGLGNCNQPLPEAAAMGGPTQSNTTDSGEQLHQVDLIGNSLHRNHISGDPEKARSTSAPLTDSEKSDDHGSFPEDHAGKSSVSTVSFLEQDQSPLHFSCGDQPLSYLGTSVDKPHHSSELTDKSPMPSTLPRDKAHHPLSGSPEENSSTATMAYMMATPARAEPSNSEASRVLAEQPSAADFVAATLQRTHRTNRPLPPPPSQRPAEQPPVVGQVQEAPSIGLNNSHKVQGTAPAPERPPESRAMGDPAPIFLSDGTAAAQCPMGASAPQPGLPEKVRESSRAPPLHLRAESFPGHSCGFAAPVPPTRTMESKMAAALHSSAADATSSSNYHSFVPSSASVDDVMPVPLPVSQPKHASQKIAYSSFARPDVTAEPFGPENCLHFNMTPNCQFRPQSVPPHHNKLEPHQVYGARSEPPASMGPRYNTYVAPGRNMSGHHSKPCSRVEYVSSLGSSVRNPCCPEDILPYPTIRRVQSLHAPPPSMIRSVPISRTEVPPDDEPAYCPRPVYQYKPYQSSQARSDYHVTQLQPYFENGRVHYRYSPYSSSSSSYYSPEGALCDVDAYGTVQLRPLHRLSSRDFAFYNPRLQGKNVYNYAGLPPRPRANATGYFSGNDHNVVTMPPTADGKHTYTSWDLEDMEKYRMQSIRRESRARQKVKGPIMSQYDNMTPAVQEDLGGIYVIHLRSKSDPGKTGLLSVAEGKEGRHPAKAVSPEGDERFYRKHPESEFDRAHHHGGYGSTQAEKPSLPQKQSSLRNRKLHDMGCSLPEHRAHQEASHRQLCESKNGPPYPQGAGQLDYGSKGMPDTSEPSNYHNSGKYMTSGQGSLTLNHKEVRLPKDLDRPRARQPPGPEKHSRDCYKEEEHFSQSMVPPPKPERSHSLKLHHTQNLERDPSVLYQYQTHSKRQSSMTVVSQYDNLEDYHSLPQHQRGGFGGAGMGAYVPSGFVHPQSRTYATALGQGAFLPTELSLPHPDTQIHAE.

Residues 24-52 (TQLTDGDEEEREESFRKMKSSIHSEEDDF) are disordered. One can recognise a PX; atypical domain in the interval 131 to 245 (GSIQLSLSEE…LTWMEIDNKG (115 aa)). Residues 259–321 (PAVGAAHVIK…PGHCVELINQ (63 aa)) form the SH3 domain. In terms of domain architecture, Rho-GAP spans 372 to 567 (CDLGEHLLNS…FILNHVDVLF (196 aa)). A phosphoserine mark is found at serine 706, serine 709, serine 732, and serine 738. A compositionally biased stretch (basic and acidic residues) spans 828–837 (KLSPSKKDAE). Residues 828-858 (KLSPSKKDAEAGGSQSQTPGSTASSEPVSPV) form a disordered region. Residues 840 to 854 (GSQSQTPGSTASSEP) are compositionally biased toward polar residues. Serine 852, serine 856, serine 892, and serine 952 each carry phosphoserine. 3 disordered regions span residues 955–1037 (QLQL…PPPP), 1119–1141 (CNQP…TDSG), and 1154–1197 (LHRN…SVST). 2 stretches are compositionally biased toward polar residues: residues 998–1014 (LSSQ…QTGA) and 1132–1141 (PTQSNTTDSG). Over residues 1175 to 1191 (DSEKSDDHGSFPEDHAG) the composition is skewed to basic and acidic residues. Phosphoserine is present on serine 1206. Residues 1221 to 1368 (GTSVDKPHHS…GDPAPIFLSD (148 aa)) are disordered. Residues 1225–1235 (DKPHHSSELTD) are compositionally biased toward basic and acidic residues. Over residues 1262-1275 (TATMAYMMATPARA) the composition is skewed to low complexity. The interval 1395-1714 (RAPPLHLRAE…YNYAGLPPRP (320 aa)) is interaction with GAB2. 2 positions are modified to asymmetric dimethylarginine: arginine 1526 and arginine 1536. Serine 1588 is modified (phosphoserine). The interaction with FYN stretch occupies residues 1688 to 2089 (SSRDFAFYNP…PHPDTQIHAE (402 aa)). Disordered regions lie at residues 1801-1865 (PGKT…QSSL) and 1881-2002 (RAHQ…LERD). The span at 1826–1841 (GDERFYRKHPESEFDR) shows a compositional bias: basic and acidic residues. Over residues 1850 to 1865 (STQAEKPSLPQKQSSL) the composition is skewed to polar residues. Over residues 1881–1892 (RAHQEASHRQLC) the composition is skewed to basic and acidic residues. A compositionally biased stretch (polar residues) spans 1918 to 1939 (SEPSNYHNSGKYMTSGQGSLTL). Composition is skewed to basic and acidic residues over residues 1940 to 1954 (NHKE…DRPR) and 1961 to 1975 (PEKH…EEHF). An Omega-N-methylarginine modification is found at arginine 2039.

This sequence belongs to the PX domain-containing GAP family. Interacts with NTRK1 (via cytoplasmic domain); the interaction is independent of the phosphorylation state of NTRK1. Interacts with SHC3 (via SH2 domain). Interacts with RASA1 (via SH3 domain); the interaction is necessary for the Ras activation and cell transforming activities of ARHGAP32. Interacts with GAB1 and GAB2. Interacts with CRK and CRKL. Found in a complex with CRKL and BCAR1; upon EGF stimulation BCAR1 may be replaced by EGFR. Interacts with NCK1 (via SH3 domain); NCK1 recruits phosphorylated BCAR1 to the complex. Isoform 2 interacts with FYN; the interaction appears to be dependent on tyrosine phosphorylation of ARHGAP32. Interacts with EGFR; the interaction requires EGF stimulation and is increased by SHC3. Interacts with CDC42; the interaction requires constitutively active CDC42. Interacts with CTNNB1, DLG4, CDH2 and GRIN2B. Interacts with GPHN. In terms of processing, isoform 2 is phosphorylated on multiple tyrosine residues by FYN. Phosphorylated tyrosine residues undergo dephosphorylation after stimulation of NMDA receptors. Phosphorylated in vitro by CaMK2 in the presence of calmodulin and calcium; which inhibits GAP activity. Isoform 1 and isoform 2 are highly expressed in brain, specially in cortex, corpus striatum, hippocampus and thalamus. Low levels in cerebellum, colon, small intestine, and kidney.

The protein resides in the postsynaptic density. The protein localises to the cell projection. It localises to the dendritic spine. It is found in the cytoplasm. Its subcellular location is the cell cortex. The protein resides in the endosome membrane. The protein localises to the golgi apparatus membrane. It localises to the endoplasmic reticulum membrane. It is found in the membrane. Its function is as follows. GTPase-activating protein (GAP) promoting GTP hydrolysis on RHOA, CDC42 and RAC1 small GTPases. May be involved in the differentiation of neuronal cells during the formation of neurite extensions. Involved in NMDA receptor activity-dependent actin reorganization in dendritic spines. May mediate cross-talks between Ras- and Rho-regulated signaling pathways in cell growth regulation. Isoform 2 has higher GAP activity. This is Rho GTPase-activating protein 32 (Arhgap32) from Mus musculus (Mouse).